The sequence spans 343 residues: Ribosomal RNA small subunit methyltransferase, chloroplastic (343 aa).

Residues 1–48 constitute a chloroplast transit peptide; sequence MMNAVITSATINCNSLSPSWTCGDNSPSKLLLGEISAALSRRRTVKVS. The S-adenosyl-L-methionine site is built by His-78, Met-80, Gly-105, Glu-126, Asp-151, and Asn-183.

It belongs to the class I-like SAM-binding methyltransferase superfamily. rRNA adenine N(6)-methyltransferase family.

The protein localises to the plastid. It is found in the chloroplast. In terms of biological role, required for methylation of the 3' adenosines in the small subunit of plastid rRNA. Essential for chloroplast biogenesis at low temperatures. The protein is Ribosomal RNA small subunit methyltransferase, chloroplastic of Arabidopsis thaliana (Mouse-ear cress).